A 401-amino-acid chain; its full sequence is Probable tRNA sulfurtransferase (401 aa).

One can recognise a THUMP domain in the interval 60–165 (EPISEQLKGV…EQATYITFKD (106 aa)). Residues 183–184 (ML), 208–209 (HF), Arg265, Gly287, and Gln296 each bind ATP.

It belongs to the ThiI family.

The protein resides in the cytoplasm. The catalysed reaction is [ThiI sulfur-carrier protein]-S-sulfanyl-L-cysteine + a uridine in tRNA + 2 reduced [2Fe-2S]-[ferredoxin] + ATP + H(+) = [ThiI sulfur-carrier protein]-L-cysteine + a 4-thiouridine in tRNA + 2 oxidized [2Fe-2S]-[ferredoxin] + AMP + diphosphate. It carries out the reaction [ThiS sulfur-carrier protein]-C-terminal Gly-Gly-AMP + S-sulfanyl-L-cysteinyl-[cysteine desulfurase] + AH2 = [ThiS sulfur-carrier protein]-C-terminal-Gly-aminoethanethioate + L-cysteinyl-[cysteine desulfurase] + A + AMP + 2 H(+). The protein operates within cofactor biosynthesis; thiamine diphosphate biosynthesis. Catalyzes the ATP-dependent transfer of a sulfur to tRNA to produce 4-thiouridine in position 8 of tRNAs, which functions as a near-UV photosensor. Also catalyzes the transfer of sulfur to the sulfur carrier protein ThiS, forming ThiS-thiocarboxylate. This is a step in the synthesis of thiazole, in the thiamine biosynthesis pathway. The sulfur is donated as persulfide by IscS. This chain is Probable tRNA sulfurtransferase, found in Bacillus pumilus (strain SAFR-032).